A 469-amino-acid polypeptide reads, in one-letter code: Protein YfjI (469 aa).

In Escherichia coli (strain K12), this protein is Protein YfjI (yfjI).